A 322-amino-acid chain; its full sequence is Cytochrome f (322 aa).

Residues 1–36 (MQKNRNTFSWVKEQMTRCISVSMMIYVITRASISNA) form the signal peptide. The heme site is built by Tyr-37, Cys-57, Cys-60, and His-61. Residues 288-308 (IQGLLFFLASVILAQIFLVLK) form a helical membrane-spanning segment.

This sequence belongs to the cytochrome f family. The 4 large subunits of the cytochrome b6-f complex are cytochrome b6, subunit IV (17 kDa polypeptide, petD), cytochrome f and the Rieske protein, while the 4 small subunits are PetG, PetL, PetM and PetN. The complex functions as a dimer. Heme serves as cofactor.

The protein resides in the plastid. The protein localises to the chloroplast thylakoid membrane. In terms of biological role, component of the cytochrome b6-f complex, which mediates electron transfer between photosystem II (PSII) and photosystem I (PSI), cyclic electron flow around PSI, and state transitions. This is Cytochrome f from Nymphaea alba (White water-lily).